The primary structure comprises 496 residues: ATP synthase subunit beta 1 (496 aa).

167 to 174 is an ATP binding site; the sequence is GGAGVGKT. A disordered region spans residues 474 to 496; the sequence is REAAAAQQSTAQQAAPAEKEPAA. A compositionally biased stretch (low complexity) spans 476–489; the sequence is AAAAQQSTAQQAAP.

Belongs to the ATPase alpha/beta chains family. F-type ATPases have 2 components, CF(1) - the catalytic core - and CF(0) - the membrane proton channel. CF(1) has five subunits: alpha(3), beta(3), gamma(1), delta(1), epsilon(1). CF(0) has three main subunits: a(1), b(2) and c(9-12). The alpha and beta chains form an alternating ring which encloses part of the gamma chain. CF(1) is attached to CF(0) by a central stalk formed by the gamma and epsilon chains, while a peripheral stalk is formed by the delta and b chains.

It is found in the cell inner membrane. It catalyses the reaction ATP + H2O + 4 H(+)(in) = ADP + phosphate + 5 H(+)(out). Its function is as follows. Produces ATP from ADP in the presence of a proton gradient across the membrane. The catalytic sites are hosted primarily by the beta subunits. This chain is ATP synthase subunit beta 1, found in Paraburkholderia xenovorans (strain LB400).